Here is a 160-residue protein sequence, read N- to C-terminus: Phosphatidylinositol N-acetylglucosaminyltransferase subunit gpi15 (160 aa).

2 consecutive transmembrane segments (helical) span residues 22-42 (GTQMFALCFISFVIGATSLAI) and 48-68 (IIITLVELSFLLSLFHIISGV).

The protein belongs to the PIGH family.

Its subcellular location is the endoplasmic reticulum membrane. The enzyme catalyses a 1,2-diacyl-sn-glycero-3-phospho-(1D-myo-inositol) + UDP-N-acetyl-alpha-D-glucosamine = a 6-(N-acetyl-alpha-D-glucosaminyl)-1-(1,2-diacyl-sn-glycero-3-phospho)-1D-myo-inositol + UDP + H(+). The protein operates within glycolipid biosynthesis; glycosylphosphatidylinositol-anchor biosynthesis. Its function is as follows. Part of the complex catalyzing the transfer of N-acetylglucosamine from UDP-N-acetylglucosamine to phosphatidylinositol, the first step of GPI biosynthesis. This Schizosaccharomyces pombe (strain 972 / ATCC 24843) (Fission yeast) protein is Phosphatidylinositol N-acetylglucosaminyltransferase subunit gpi15 (gpi15).